A 292-amino-acid chain; its full sequence is Ribosomal protein L11 methyltransferase (292 aa).

Residues Thr144, Gly165, Asp187, and Asn229 each coordinate S-adenosyl-L-methionine.

This sequence belongs to the methyltransferase superfamily. PrmA family.

The protein resides in the cytoplasm. The enzyme catalyses L-lysyl-[protein] + 3 S-adenosyl-L-methionine = N(6),N(6),N(6)-trimethyl-L-lysyl-[protein] + 3 S-adenosyl-L-homocysteine + 3 H(+). In terms of biological role, methylates ribosomal protein L11. In Pseudomonas putida (strain ATCC 700007 / DSM 6899 / JCM 31910 / BCRC 17059 / LMG 24140 / F1), this protein is Ribosomal protein L11 methyltransferase.